A 352-amino-acid chain; its full sequence is GTPase Obg (352 aa).

The Obg domain maps to 1–159 (MQFIDQAEIQ…RMLRLELKLL (159 aa)). The OBG-type G domain occupies 160-330 (AEVGIIGLPN…LMQEIWGLLE (171 aa)). GTP-binding positions include 166-173 (GLPNAGKS), 191-195 (FTTLV), 213-216 (DIPG), 280-283 (NKVD), and 311-313 (SAV). 2 residues coordinate Mg(2+): Ser173 and Thr193.

This sequence belongs to the TRAFAC class OBG-HflX-like GTPase superfamily. OBG GTPase family. In terms of assembly, monomer. Mg(2+) is required as a cofactor.

It is found in the cytoplasm. An essential GTPase which binds GTP, GDP and possibly (p)ppGpp with moderate affinity, with high nucleotide exchange rates and a fairly low GTP hydrolysis rate. Plays a role in control of the cell cycle, stress response, ribosome biogenesis and in those bacteria that undergo differentiation, in morphogenesis control. In Trichodesmium erythraeum (strain IMS101), this protein is GTPase Obg.